A 62-amino-acid chain; its full sequence is Probable tautomerase SH1546 (62 aa).

The active-site Proton acceptor; via imino nitrogen is Pro-2.

Belongs to the 4-oxalocrotonate tautomerase family.

In Staphylococcus haemolyticus (strain JCSC1435), this protein is Probable tautomerase SH1546.